Here is a 252-residue protein sequence, read N- to C-terminus: 3-dehydroquinate dehydratase (252 aa).

Residues 46–48 (EWR) and Arg82 contribute to the 3-dehydroquinate site. His143 functions as the Proton donor/acceptor in the catalytic mechanism. Residue Lys170 is the Schiff-base intermediate with substrate of the active site. Residues Arg212, Ser231, and Gln235 each coordinate 3-dehydroquinate.

This sequence belongs to the type-I 3-dehydroquinase family. Homodimer.

It carries out the reaction 3-dehydroquinate = 3-dehydroshikimate + H2O. It functions in the pathway metabolic intermediate biosynthesis; chorismate biosynthesis; chorismate from D-erythrose 4-phosphate and phosphoenolpyruvate: step 3/7. Involved in the third step of the chorismate pathway, which leads to the biosynthesis of aromatic amino acids. Catalyzes the cis-dehydration of 3-dehydroquinate (DHQ) and introduces the first double bond of the aromatic ring to yield 3-dehydroshikimate. This is 3-dehydroquinate dehydratase from Listeria welshimeri serovar 6b (strain ATCC 35897 / DSM 20650 / CCUG 15529 / CIP 8149 / NCTC 11857 / SLCC 5334 / V8).